Consider the following 282-residue polypeptide: MPAKVLDGKKIAADYRANLAQEVEQLKAQGVTPNLTVILVGNDGASQSYVNNKKKSAEKIGMSSSIIHLDESTTEAALLEEIDKLNNDDNVHGILVQVPLPKQIDETKVLEKIAPEKDVDGFNPINIGRLYAGVETYIPCTPLGIMEILKHADIDLEGKDVAVIGRSHIVGQPVAKLLTDANATVTLLHSRSKDMDAVLKRSDVIVSAVGKPGLVTKDVVKQGAVIVDVGNTVVDGKLTGDVVYDEVSEVAGAITPVPGGVGPLTITMVLNNTLLAAKRAQQ.

NADP(+)-binding positions include 165–167 (GRS) and Ser-190.

This sequence belongs to the tetrahydrofolate dehydrogenase/cyclohydrolase family. As to quaternary structure, homodimer.

It catalyses the reaction (6R)-5,10-methylene-5,6,7,8-tetrahydrofolate + NADP(+) = (6R)-5,10-methenyltetrahydrofolate + NADPH. The catalysed reaction is (6R)-5,10-methenyltetrahydrofolate + H2O = (6R)-10-formyltetrahydrofolate + H(+). It functions in the pathway one-carbon metabolism; tetrahydrofolate interconversion. Catalyzes the oxidation of 5,10-methylenetetrahydrofolate to 5,10-methenyltetrahydrofolate and then the hydrolysis of 5,10-methenyltetrahydrofolate to 10-formyltetrahydrofolate. This Macrococcus caseolyticus (strain JCSC5402) (Macrococcoides caseolyticum) protein is Bifunctional protein FolD.